Reading from the N-terminus, the 150-residue chain is Large ribosomal subunit protein bL9 (150 aa).

It belongs to the bacterial ribosomal protein bL9 family.

Binds to the 23S rRNA. This chain is Large ribosomal subunit protein bL9, found in Streptococcus gordonii (strain Challis / ATCC 35105 / BCRC 15272 / CH1 / DL1 / V288).